The following is a 1363-amino-acid chain: Spike glycoprotein (1363 aa).

Positions 1 to 13 (MFLILLISLPTAF) are cleaved as a signal peptide. The Extracellular segment spans residues 14–1307 (AVIGDLKCTT…GTYEYYVKWP (1294 aa)). The region spanning 15–298 (VIGDLKCTTV…DFMSEIKCKT (284 aa)) is the BetaCoV S1-NTD domain. 5 disulfide bridges follow: Cys21–Cys165, Cys160–Cys193, Cys172–Cys252, Cys286–Cys296, and Cys331–Cys356. Asn59 and Asn133 each carry an N-linked (GlcNAc...) asparagine; by host glycan. N-linked (GlcNAc...) asparagine; by host glycosylation occurs at Asn198. Positions 329 to 617 (PDCNIEAWLN…DVNSGTTCST (289 aa)) constitute a BetaCoV S1-CTD domain. N-linked (GlcNAc...) asparagine; by host glycosylation occurs at Asn359. Intrachain disulfides connect Cys374-Cys427 and Cys386-Cys615. Asn437, Asn649, Asn676, Asn696, Asn714, Asn739, and Asn788 each carry an N-linked (GlcNAc...) asparagine; by host glycan. 2 fusion peptide regions span residues 914 to 935 (SAIE…VEAY) and 933 to 953 (EAYN…VQSY). N-linked (GlcNAc...) asparagine; by host glycosylation occurs at Asn937. An intrachain disulfide couples Cys938 to Cys949. Residues 1014–1064 (QKLIANAFNNALGAIQEGFDATNSALVKIQAVVNANAEALNNLLQQLSNRF) form a heptad repeat 1 region. Residues 1043–1087 (QAVVNANAEALNNLLQQLSNRFGAISSSLQEILSRLDALEAQAQI) are a coiled coil. 6 N-linked (GlcNAc...) asparagine; by host glycosylation sites follow: Asn1194, Asn1224, Asn1234, Asn1253, Asn1267, and Asn1288. A heptad repeat 2 region spans residues 1258–1296 (APDLSLDYINVTFLDLQDEMNRLQEAIKVLNQSYINLKD). Residues 1269–1297 (TFLDLQDEMNRLQEAIKVLNQSYINLKDI) adopt a coiled-coil conformation. The helical transmembrane segment at 1308-1328 (WYVWLLIGFAGVAMLVLLFFI) threads the bilayer. Residues 1329 to 1363 (CCCTGCGTSCFKKCGGCCDDYTGHQELVIKTSHDD) lie on the Cytoplasmic side of the membrane. The KxHxx motif lies at 1359 to 1363 (TSHDD).

It belongs to the betacoronaviruses spike protein family. Homotrimer; each monomer consists of a S1 and a S2 subunit. The resulting peplomers protrude from the virus surface as spikes. Post-translationally, specific enzymatic cleavages in vivo yield mature proteins. The precursor is processed into S1 and S2 by host cell furin or another cellular protease to yield the mature S1 and S2 proteins. Additionally, a second cleavage leads to the release of a fusion peptide after viral attachment to host cell receptor. In terms of processing, the cytoplasmic Cys-rich domain is palmitoylated. Spike glycoprotein is digested within host endosomes.

The protein resides in the virion membrane. Its subcellular location is the host endoplasmic reticulum-Golgi intermediate compartment membrane. It localises to the host cell membrane. Attaches the virion to the cell membrane by interacting with host receptor, initiating the infection. In terms of biological role, mediates fusion of the virion and cellular membranes by acting as a class I viral fusion protein. Under the current model, the protein has at least three conformational states: pre-fusion native state, pre-hairpin intermediate state, and post-fusion hairpin state. During viral and target cell membrane fusion, the coiled coil regions (heptad repeats) assume a trimer-of-hairpins structure, positioning the fusion peptide in close proximity to the C-terminal region of the ectodomain. The formation of this structure appears to drive apposition and subsequent fusion of viral and target cell membranes. Its function is as follows. Acts as a viral fusion peptide which is unmasked following S2 cleavage occurring upon virus endocytosis. The protein is Spike glycoprotein of Bovine coronavirus (strain LSU-94LSS-051) (BCoV-LSU).